An 802-amino-acid polypeptide reads, in one-letter code: Copper-exporting P-type ATPase (802 aa).

HMA domains follow at residues 5-70 (KKTT…YGVA) and 72-138 (ETVE…YDAS). Cu(+) contacts are provided by C16, C19, C83, and C86. 6 helical membrane-spanning segments follow: residues 161 to 181 (LIIS…HLFN), 192 to 212 (WFQF…FYVG), 224 to 244 (MDVL…YEMI), 256 to 276 (LYFE…YLEA), 411 to 431 (YFVP…ITLV), and 438 to 458 (PALV…LGLA). The active-site 4-aspartylphosphate intermediate is D495. Positions 690 and 694 each coordinate Mg(2+). Transmembrane regions (helical) follow at residues 748–767 (LFWA…LGLL) and 771–790 (VAGA…ALRL).

It belongs to the cation transport ATPase (P-type) (TC 3.A.3) family. Type IB subfamily.

The protein localises to the cell membrane. It carries out the reaction Cu(+)(in) + ATP + H2O = Cu(+)(out) + ADP + phosphate + H(+). In terms of biological role, involved in copper export. The sequence is that of Copper-exporting P-type ATPase (copA) from Staphylococcus aureus (strain bovine RF122 / ET3-1).